The sequence spans 188 residues: HTH-type transcriptional repressor AcnR (188 aa).

An HTH tetR-type domain is found at 10 to 70 (TNSRQEILEG…ALAREDAARM (61 aa)). The H-T-H motif DNA-binding region spans 33-52 (TVRRLEEATGKSRGAIFHHF). Citrate-binding positions include 79–80 (LV), Arg130, and Asn134. Residue Glu181 participates in Mg(2+) binding. Arg185 provides a ligand contact to citrate.

In terms of assembly, homodimer.

AcnR negatively controls the expression of the aconitase gene acn. Binds to the imperfect inverted repeat in the acn promoter region. This is HTH-type transcriptional repressor AcnR from Corynebacterium glutamicum (strain ATCC 13032 / DSM 20300 / JCM 1318 / BCRC 11384 / CCUG 27702 / LMG 3730 / NBRC 12168 / NCIMB 10025 / NRRL B-2784 / 534).